A 130-amino-acid polypeptide reads, in one-letter code: S-adenosylmethionine decarboxylase proenzyme (130 aa).

Ser-63 acts as the Schiff-base intermediate with substrate; via pyruvic acid in catalysis. A Pyruvic acid (Ser); by autocatalysis modification is found at Ser-63. His-68 (proton acceptor; for processing activity) is an active-site residue. Cys-83 serves as the catalytic Proton donor; for catalytic activity.

The protein belongs to the prokaryotic AdoMetDC family. Type 1 subfamily. Heterotetramer of two alpha and two beta chains arranged as a dimer of alpha/beta heterodimers. Pyruvate is required as a cofactor. In terms of processing, is synthesized initially as an inactive proenzyme. Formation of the active enzyme involves a self-maturation process in which the active site pyruvoyl group is generated from an internal serine residue via an autocatalytic post-translational modification. Two non-identical subunits are generated from the proenzyme in this reaction, and the pyruvate is formed at the N-terminus of the alpha chain, which is derived from the carboxyl end of the proenzyme. The post-translation cleavage follows an unusual pathway, termed non-hydrolytic serinolysis, in which the side chain hydroxyl group of the serine supplies its oxygen atom to form the C-terminus of the beta chain, while the remainder of the serine residue undergoes an oxidative deamination to produce ammonia and the pyruvoyl group blocking the N-terminus of the alpha chain.

The enzyme catalyses S-adenosyl-L-methionine + H(+) = S-adenosyl 3-(methylsulfanyl)propylamine + CO2. It participates in amine and polyamine biosynthesis; S-adenosylmethioninamine biosynthesis; S-adenosylmethioninamine from S-adenosyl-L-methionine: step 1/1. Functionally, catalyzes the decarboxylation of S-adenosylmethionine to S-adenosylmethioninamine (dcAdoMet), the propylamine donor required for the synthesis of the polyamines spermine and spermidine from the diamine putrescine. The protein is S-adenosylmethionine decarboxylase proenzyme (speH) of Thermotoga maritima (strain ATCC 43589 / DSM 3109 / JCM 10099 / NBRC 100826 / MSB8).